Reading from the N-terminus, the 394-residue chain is Magnesium transporter MRS2-2 (394 aa).

The disordered stretch occupies residues 115–145; the sequence is PVGNASHNGGQGDGKEIAGAQNDGDTGDEDE. 2 helical membrane passes run 329–349 and 366–386; these read LVLS…GIFG and YVVG…MSYA. The Required for magnesium transport activity signature appears at 349–351; the sequence is GMN.

It belongs to the CorA metal ion transporter (MIT) (TC 1.A.35.5) family. In terms of tissue distribution, expressed in the whole plant but preferentially in the mature anthers.

It localises to the membrane. Functionally, low-affinity magnesium transporter that mediates the influx of magnesium. Plays a crucial role in male gametophyte development and male fertility. The polypeptide is Magnesium transporter MRS2-2 (MRS2-2) (Arabidopsis thaliana (Mouse-ear cress)).